The following is a 202-amino-acid chain: Small ribosomal subunit protein uS5 (202 aa).

One can recognise an S5 DRBM domain in the interval leucine 42–valine 105. Threonine 192 is subject to Phosphothreonine.

It belongs to the universal ribosomal protein uS5 family. In terms of assembly, component of the small ribosomal subunit. Interacts with zinc finger protein ZNF277 (via zinc-finger domains); the interaction is direct; the interaction is extra-ribosomal. Interaction with ZNF277 competes with the binding of RPS2 to protein arginine methyltransferase PRMT3. Post-translationally, citrullinated by PADI4 in the Arg/Gly-rich region. Asymmetric arginine dimethylation by PRMT3 occurs at multiple sites in the Arg/Gly-rich region. In terms of processing, monoubiquitinated by RNF10 when a ribosome has stalled during translation, leading to its degradation by the proteasome. Deubiquitinated by USP10, preventing degradation by the proteasome and promoting 40S ribosome subunit recycling following ribosome dissociation.

It is found in the cytoplasm. It localises to the nucleus. The protein resides in the nucleolus. Component of the ribosome, a large ribonucleoprotein complex responsible for the synthesis of proteins in the cell. The small ribosomal subunit (SSU) binds messenger RNAs (mRNAs) and translates the encoded message by selecting cognate aminoacyl-transfer RNA (tRNA) molecules. The large subunit (LSU) contains the ribosomal catalytic site termed the peptidyl transferase center (PTC), which catalyzes the formation of peptide bonds, thereby polymerizing the amino acids delivered by tRNAs into a polypeptide chain. The nascent polypeptides leave the ribosome through a tunnel in the LSU and interact with protein factors that function in enzymatic processing, targeting, and the membrane insertion of nascent chains at the exit of the ribosomal tunnel. Plays a role in the assembly and function of the 40S ribosomal subunit. Mutations in this protein affects the control of translational fidelity. Involved in nucleolar processing of pre-18S ribosomal RNA and ribosome assembly. The polypeptide is Small ribosomal subunit protein uS5 (RPS2) (Cricetulus griseus (Chinese hamster)).